The primary structure comprises 89 residues: Acylphosphatase (89 aa).

Positions Gln-3 to Ile-89 constitute an Acylphosphatase-like domain. Catalysis depends on residues Arg-18 and Asn-36.

It belongs to the acylphosphatase family.

It carries out the reaction an acyl phosphate + H2O = a carboxylate + phosphate + H(+). The polypeptide is Acylphosphatase (acyP) (Staphylococcus haemolyticus (strain JCSC1435)).